Here is a 305-residue protein sequence, read N- to C-terminus: Nuclear egress protein 1 (305 aa).

Positions 1 to 11 (MDRERPRKTRE) are enriched in basic and acidic residues. The segment at 1-24 (MDRERPRKTREPASPGSVLSKRSK) is disordered. The segment at 104-230 (CLVLSPLGHA…FALFKTDDLH (127 aa)) adopts a CCCH-type zinc-finger fold.

The protein belongs to the herpesviridae NEC1 protein family. As to quaternary structure, forms a heterohexameric complex with NEC2. Interacts with capsid vertex specific component 2/CVC2; this interaction directs the capsid to the host inner nuclear membrane to initiate budding. In terms of processing, phosphorylated at serine residues in the N-terminus. This phosphorylation regulates the localization within the inner nuclear membrane.

The protein localises to the host nucleus inner membrane. Plays an essential role in virion nuclear egress, the first step of virion release from infected cell. Within the host nucleus, NEC1 interacts with the newly formed capsid through the vertexes and directs it to the inner nuclear membrane by associating with NEC2. Induces the budding of the capsid at the inner nuclear membrane as well as its envelopment into the perinuclear space. There, the NEC1/NEC2 complex promotes the fusion of the enveloped capsid with the outer nuclear membrane and the subsequent release of the viral capsid into the cytoplasm where it will reach the secondary budding sites in the host Golgi or trans-Golgi network. This is Nuclear egress protein 1 from Equus caballus (Horse).